A 450-amino-acid chain; its full sequence is tRNA modification GTPase MnmE (450 aa).

Arg24, Glu82, and Lys121 together coordinate (6S)-5-formyl-5,6,7,8-tetrahydrofolate. One can recognise a TrmE-type G domain in the interval 218–375 (GMHVVLVGQP…LRQVLLEAVG (158 aa)). Position 228 (Asn228) interacts with K(+). GTP-binding positions include 228–233 (NVGKSS), 247–253 (TDIAGTT), 272–275 (DTAG), and 356–358 (SAR). Ser232 contacts Mg(2+). The K(+) site is built by Thr247, Ile249, and Thr252. A Mg(2+)-binding site is contributed by Thr253. (6S)-5-formyl-5,6,7,8-tetrahydrofolate is bound at residue Lys450.

Belongs to the TRAFAC class TrmE-Era-EngA-EngB-Septin-like GTPase superfamily. TrmE GTPase family. Homodimer. Heterotetramer of two MnmE and two MnmG subunits. Requires K(+) as cofactor.

The protein localises to the cytoplasm. Exhibits a very high intrinsic GTPase hydrolysis rate. Involved in the addition of a carboxymethylaminomethyl (cmnm) group at the wobble position (U34) of certain tRNAs, forming tRNA-cmnm(5)s(2)U34. In Laribacter hongkongensis (strain HLHK9), this protein is tRNA modification GTPase MnmE.